A 366-amino-acid polypeptide reads, in one-letter code: tRNA/tmRNA (uracil-C(5))-methyltransferase (366 aa).

5 residues coordinate S-adenosyl-L-methionine: glutamine 190, tyrosine 218, asparagine 223, glutamate 239, and aspartate 299. Residue cysteine 324 is the Nucleophile of the active site. Glutamate 358 acts as the Proton acceptor in catalysis.

It belongs to the class I-like SAM-binding methyltransferase superfamily. RNA M5U methyltransferase family. TrmA subfamily.

It carries out the reaction uridine(54) in tRNA + S-adenosyl-L-methionine = 5-methyluridine(54) in tRNA + S-adenosyl-L-homocysteine + H(+). The catalysed reaction is uridine(341) in tmRNA + S-adenosyl-L-methionine = 5-methyluridine(341) in tmRNA + S-adenosyl-L-homocysteine + H(+). Dual-specificity methyltransferase that catalyzes the formation of 5-methyluridine at position 54 (m5U54) in all tRNAs, and that of position 341 (m5U341) in tmRNA (transfer-mRNA). The polypeptide is tRNA/tmRNA (uracil-C(5))-methyltransferase (Salmonella newport (strain SL254)).